A 489-amino-acid polypeptide reads, in one-letter code: MAEKITRETSLPKERSSPQALILGRYEMGKLLGHGTFAKVYLARNVKTNESVAIKVIDKEKVLKGGLIAHIKREISILRRVRHPNIVQLFEVMATKAKIYFVMEYVRGGELFNKVAKGRLKEEVARKYFQQLISAVTFCHARGVYHRDLKPENLLLDENGNLKVSDFGLSAVSDQIRQDGLFHTFCGTPAYVAPEVLARKGYDAAKVDIWSCGVILFVLMAGYLPFHDRNVMAMYKKIYRGEFRCPRWFSTELTRLLSKLLETNPEKRFTFPEIMENSWFKKGFKHIKFYVEDDKLCNVVDDDELESDSVESDRDSAASESEIEYLEPRRRVGGLPRPASLNAFDIISFSQGFDLSGLFDDDGEGSRFVSGAPVSKIISKLEEIAKVVSFTVRKKDCRVSLEGSRQGVKGPLTIAAEIFELTPSLVVVEVKKKGGDKTEYEDFCNNELKPKLQNLTADDVVAEPVAVSAVDETAIPNSPTISFLPSDTE.

One can recognise a Protein kinase domain in the interval tyrosine 26 to phenylalanine 280. Residues leucine 32–valine 40 and lysine 55 contribute to the ATP site. The active-site Proton acceptor is the aspartate 148. The interval aspartate 166 to glutamate 195 is activation loop. Position 170 is a phosphoserine (serine 170). Threonine 184 is modified (phosphothreonine). The region spanning proline 336–aspartate 360 is the NAF domain. A PPI region spans residues glycine 363–valine 392.

Belongs to the protein kinase superfamily. CAMK Ser/Thr protein kinase family. SNF1 subfamily. In terms of assembly, interacts with CBL2 and CBL3. Requires Mn(2+) as cofactor. As to expression, expressed in roots and shoots.

The enzyme catalyses L-seryl-[protein] + ATP = O-phospho-L-seryl-[protein] + ADP + H(+). It catalyses the reaction L-threonyl-[protein] + ATP = O-phospho-L-threonyl-[protein] + ADP + H(+). CIPK serine-threonine protein kinases interact with CBL proteins. Binding of a CBL protein to the regulatory NAF domain of CIPK protein lead to the activation of the kinase in a calcium-dependent manner. This chain is CBL-interacting serine/threonine-protein kinase 12 (CIPK12), found in Arabidopsis thaliana (Mouse-ear cress).